Here is a 477-residue protein sequence, read N- to C-terminus: Histone-lysine N-methyltransferase SUV39H2 (477 aa).

The interval 1 to 59 (MATARAKARGSEAGARCHRAPGPPPRPKARRTARRRRAETLTARRSRPSAGERRAGSQR) is disordered. The segment covering 27–37 (PKARRTARRRR) has biased composition (basic residues). Residues 118-176 (YEVEYLCDYKVAKGVEYYLVKWKGWPDSTNTWEPLRNLRCPQLLRQFSDDKKTYLAQER) form the Chromo domain. The Pre-SET domain maps to 256 to 314 (FGCSCTDCFFDKCCPAEAGVVLAYNKKQQIKIQPGTPIYECNSRCRCGPECPNRIVQKG). Residues Cys-258, Cys-260, Cys-263, Cys-268, Cys-269, Cys-296, Cys-300, Cys-302, and Cys-306 each contribute to the Zn(2+) site. One can recognise an SET domain in the interval 317-440 (YSLCIFKTSN…AGEELTFDYQ (124 aa)). S-adenosyl-L-methionine contacts are provided by residues 328-330 (CGW), Tyr-371, and 397-398 (NH). Cys-400 is a Zn(2+) binding site. Phosphoserine is present on residues Ser-448, Ser-451, and Ser-455. Residues 461–477 (VRTQCKCGAETCRGYLN) form the Post-SET domain. Cys-465, Cys-467, and Cys-472 together coordinate Zn(2+).

This sequence belongs to the class V-like SAM-binding methyltransferase superfamily. Histone-lysine methyltransferase family. Suvar3-9 subfamily. Interacts with SMAD5. The large PER complex involved in the histone methylation is composed of at least PER2, CBX3, TRIM28, SUV39H1 and/or SUV39H2; CBX3 mediates the formation of the complex. In terms of processing, ubiquitinated by the DCX(DCAF13) E3 ubiquitin ligase complex, leading to its degradation. As to expression, testis specific; predominant expression in type B spermatogonia and preleptotene spermatocytes.

Its subcellular location is the nucleus. It is found in the chromosome. It localises to the centromere. It carries out the reaction L-lysyl(9)-[histone H3] + 3 S-adenosyl-L-methionine = N(6),N(6),N(6)-trimethyl-L-lysyl(9)-[histone H3] + 3 S-adenosyl-L-homocysteine + 3 H(+). Its function is as follows. Histone methyltransferase that specifically trimethylates 'Lys-9' of histone H3 using monomethylated H3 'Lys-9' as substrate. H3 'Lys-9' trimethylation represents a specific tag for epigenetic transcriptional repression by recruiting HP1 (CBX1, CBX3 and/or CBX5) proteins to methylated histones. Mainly functions in heterochromatin regions, thereby playing a central role in the establishment of constitutive heterochromatin at pericentric and telomere regions. H3 'Lys-9' trimethylation is also required to direct DNA methylation at pericentric repeats. SUV39H1 is targeted to histone H3 via its interaction with RB1 and is involved in many processes, such as cell cycle regulation, transcriptional repression and regulation of telomere length. May participate in regulation of higher-order chromatin organization during spermatogenesis. Recruited by the large PER complex to the E-box elements of the circadian target genes such as PER2 itself or PER1, contributes to the conversion of local chromatin to a heterochromatin-like repressive state through H3 'Lys-9' trimethylation. In Mus musculus (Mouse), this protein is Histone-lysine N-methyltransferase SUV39H2 (Suv39h2).